Here is a 61-residue protein sequence, read N- to C-terminus: Protein SspF (61 aa).

The protein belongs to the alpha/beta-type SASP family.

Functionally, may play some important role in either sporulation or the dormant spore. This chain is Protein SspF (sspF), found in Bacillus subtilis (strain 168).